The sequence spans 188 residues: ATP synthase subunit b 2 (188 aa).

Positions 1 to 23 (MAEGHGDANGATAHTAADGGHKA) are disordered. Low complexity predominate over residues 8–18 (ANGATAHTAAD). Residues 37–57 (LVSLLIAFVALYLIVSKIALP) traverse the membrane as a helical segment.

It belongs to the ATPase B chain family. As to quaternary structure, F-type ATPases have 2 components, F(1) - the catalytic core - and F(0) - the membrane proton channel. F(1) has five subunits: alpha(3), beta(3), gamma(1), delta(1), epsilon(1). F(0) has three main subunits: a(1), b(2) and c(10-14). The alpha and beta chains form an alternating ring which encloses part of the gamma chain. F(1) is attached to F(0) by a central stalk formed by the gamma and epsilon chains, while a peripheral stalk is formed by the delta and b chains.

It localises to the cell inner membrane. Functionally, f(1)F(0) ATP synthase produces ATP from ADP in the presence of a proton or sodium gradient. F-type ATPases consist of two structural domains, F(1) containing the extramembraneous catalytic core and F(0) containing the membrane proton channel, linked together by a central stalk and a peripheral stalk. During catalysis, ATP synthesis in the catalytic domain of F(1) is coupled via a rotary mechanism of the central stalk subunits to proton translocation. Component of the F(0) channel, it forms part of the peripheral stalk, linking F(1) to F(0). The b'-subunit is a diverged and duplicated form of b found in plants and photosynthetic bacteria. This chain is ATP synthase subunit b 2 (atpF2), found in Rhodopseudomonas palustris (strain BisB18).